The following is a 496-amino-acid chain: Bifunctional protein HldE (496 aa).

The interval 1–331 is ribokinase; that stretch reads MDPTPALAEI…AAVHQEEVSA (331 aa). 206–209 lines the ATP pocket; the sequence is NRKE. Asp276 is a catalytic residue. A cytidylyltransferase region spans residues 358–496; that stretch reads FTNGCFDLLH…GGSRRSGDTL (139 aa).

In the N-terminal section; belongs to the carbohydrate kinase PfkB family. The protein in the C-terminal section; belongs to the cytidylyltransferase family. In terms of assembly, homodimer.

It catalyses the reaction D-glycero-beta-D-manno-heptose 7-phosphate + ATP = D-glycero-beta-D-manno-heptose 1,7-bisphosphate + ADP + H(+). The catalysed reaction is D-glycero-beta-D-manno-heptose 1-phosphate + ATP + H(+) = ADP-D-glycero-beta-D-manno-heptose + diphosphate. Its pathway is nucleotide-sugar biosynthesis; ADP-L-glycero-beta-D-manno-heptose biosynthesis; ADP-L-glycero-beta-D-manno-heptose from D-glycero-beta-D-manno-heptose 7-phosphate: step 1/4. It functions in the pathway nucleotide-sugar biosynthesis; ADP-L-glycero-beta-D-manno-heptose biosynthesis; ADP-L-glycero-beta-D-manno-heptose from D-glycero-beta-D-manno-heptose 7-phosphate: step 3/4. Functionally, catalyzes the phosphorylation of D-glycero-D-manno-heptose 7-phosphate at the C-1 position to selectively form D-glycero-beta-D-manno-heptose-1,7-bisphosphate. Its function is as follows. Catalyzes the ADP transfer from ATP to D-glycero-beta-D-manno-heptose 1-phosphate, yielding ADP-D-glycero-beta-D-manno-heptose. In Rhodospirillum rubrum (strain ATCC 11170 / ATH 1.1.1 / DSM 467 / LMG 4362 / NCIMB 8255 / S1), this protein is Bifunctional protein HldE.